The primary structure comprises 152 residues: uncharacterized protein (152 aa).

The segment at 127–152 (EKEKAERKAEKAKKNKKKSSTKTKKK) is disordered. Basic residues predominate over residues 136-152 (EKAKKNKKKSSTKTKKK).

Belongs to the mimivirus R546 family.

This is an uncharacterized protein from Sputnik virophage.